The primary structure comprises 64 residues: SPbeta prophage-derived uncharacterized protein YopV (64 aa).

This chain is SPbeta prophage-derived uncharacterized protein YopV (yopV), found in Bacillus subtilis (strain 168).